Here is a 333-residue protein sequence, read N- to C-terminus: Adenosine deaminase (333 aa).

2 residues coordinate Zn(2+): histidine 12 and histidine 14. Substrate-binding residues include histidine 14, aspartate 16, and glycine 170. Residue histidine 197 participates in Zn(2+) binding. Glutamate 200 (proton donor) is an active-site residue. Aspartate 278 contributes to the Zn(2+) binding site. Aspartate 279 serves as a coordination point for substrate.

This sequence belongs to the metallo-dependent hydrolases superfamily. Adenosine and AMP deaminases family. Adenosine deaminase subfamily. Zn(2+) is required as a cofactor.

It catalyses the reaction adenosine + H2O + H(+) = inosine + NH4(+). The catalysed reaction is 2'-deoxyadenosine + H2O + H(+) = 2'-deoxyinosine + NH4(+). In terms of biological role, catalyzes the hydrolytic deamination of adenosine and 2-deoxyadenosine. The polypeptide is Adenosine deaminase (Edwardsiella ictaluri (strain 93-146)).